Consider the following 399-residue polypeptide: S-adenosylmethionine synthase (399 aa).

An ATP-binding site is contributed by His-17. Asp-19 provides a ligand contact to Mg(2+). Residue Glu-45 coordinates K(+). 2 residues coordinate L-methionine: Glu-58 and Gln-101. The segment at Gln-101–Glu-111 is flexible loop. ATP-binding positions include Asp-177 to Lys-179, Arg-244 to Phe-245, Asp-253, Arg-259 to Lys-260, Ala-276, and Lys-280. Asp-253 serves as a coordination point for L-methionine. L-methionine is bound at residue Lys-284.

It belongs to the AdoMet synthase family. Homotetramer; dimer of dimers. It depends on Mg(2+) as a cofactor. The cofactor is K(+).

It is found in the cytoplasm. It carries out the reaction L-methionine + ATP + H2O = S-adenosyl-L-methionine + phosphate + diphosphate. It functions in the pathway amino-acid biosynthesis; S-adenosyl-L-methionine biosynthesis; S-adenosyl-L-methionine from L-methionine: step 1/1. Functionally, catalyzes the formation of S-adenosylmethionine (AdoMet) from methionine and ATP. The overall synthetic reaction is composed of two sequential steps, AdoMet formation and the subsequent tripolyphosphate hydrolysis which occurs prior to release of AdoMet from the enzyme. In Listeria innocua serovar 6a (strain ATCC BAA-680 / CLIP 11262), this protein is S-adenosylmethionine synthase.